The sequence spans 285 residues: Nucleotide-binding protein Pmen_0867 (285 aa).

ATP is bound at residue 8 to 15; that stretch reads GRSGSGKS. A GTP-binding site is contributed by 60–63; it reads DARN.

The protein belongs to the RapZ-like family.

In terms of biological role, displays ATPase and GTPase activities. This Ectopseudomonas mendocina (strain ymp) (Pseudomonas mendocina) protein is Nucleotide-binding protein Pmen_0867.